Consider the following 112-residue polypeptide: UPF0102 protein TTHA0372 (112 aa).

This sequence belongs to the UPF0102 family.

This Thermus thermophilus (strain ATCC 27634 / DSM 579 / HB8) protein is UPF0102 protein TTHA0372.